The following is a 249-amino-acid chain: UDP-N-acetyl-D-mannosaminuronic acid transferase (249 aa).

The protein belongs to the glycosyltransferase 26 family.

It catalyses the reaction UDP-N-acetyl-alpha-D-mannosaminouronate + N-acetyl-alpha-D-glucosaminyl-di-trans,octa-cis-undecaprenyl diphosphate = beta-D-ManNAcA-(1-&gt;4)-alpha-D-GlcNAc-di-trans,octa-cis-undecaprenyl diphosphate + UDP + H(+). It participates in bacterial outer membrane biogenesis; enterobacterial common antigen biosynthesis. Catalyzes the synthesis of Und-PP-GlcNAc-ManNAcA (Lipid II), the second lipid-linked intermediate involved in enterobacterial common antigen (ECA) synthesis. The chain is UDP-N-acetyl-D-mannosaminuronic acid transferase from Pectobacterium atrosepticum (strain SCRI 1043 / ATCC BAA-672) (Erwinia carotovora subsp. atroseptica).